The sequence spans 469 residues: MSDDLSMKCGLEIHVQVDTNSKLFCKCPTNYKDVFPNTNICPVCIGHPGAKPMPPNKKAFDIAIMVAKMLNCEMITDKDIYFQRKHYNYPDLPSGYQRTSVPIGEKGNFLGVGITEVHLEEDPGQYKPDLGTVDYNRSGTPLIEIVTDPDMKSPEEAREFLRQLMRLFRYIGNLRGEGTMRADTNISINYNGIQGKRVEVKNVNSIKGVYKVLKYEIIRQKNILRRGGEIKMETRAFMESQMITKSMRSKETADDYRYIPDPDLQPIVLDNSWIERVESEMPETPISKEKRFVEQYGIKEDDSKVLVSDLDLADVFERVIKDVGSDETGISLAVTWVRNELKRVLVYNKIDFFESNLKPEHIIELINSIKDRTISQKIGKTVIEHMVDQKGEKTPKELITELGLTVIEDVSELDQACEEAIKNSEKAIEDYKSGNIRALNSVVGQVMKLTKGRAEPGTVVEMLKKKIDG.

This sequence belongs to the GatB/GatE family. GatB subfamily. As to quaternary structure, heterotrimer of A, B and C subunits.

The catalysed reaction is L-glutamyl-tRNA(Gln) + L-glutamine + ATP + H2O = L-glutaminyl-tRNA(Gln) + L-glutamate + ADP + phosphate + H(+). The enzyme catalyses L-aspartyl-tRNA(Asn) + L-glutamine + ATP + H2O = L-asparaginyl-tRNA(Asn) + L-glutamate + ADP + phosphate + 2 H(+). Allows the formation of correctly charged Asn-tRNA(Asn) or Gln-tRNA(Gln) through the transamidation of misacylated Asp-tRNA(Asn) or Glu-tRNA(Gln) in organisms which lack either or both of asparaginyl-tRNA or glutaminyl-tRNA synthetases. The reaction takes place in the presence of glutamine and ATP through an activated phospho-Asp-tRNA(Asn) or phospho-Glu-tRNA(Gln). This is Aspartyl/glutamyl-tRNA(Asn/Gln) amidotransferase subunit B from Methanococcus vannielii (strain ATCC 35089 / DSM 1224 / JCM 13029 / OCM 148 / SB).